The primary structure comprises 514 residues: Na(+)/H(+) antiporter NhaB (514 aa).

12 consecutive transmembrane segments (helical) span residues 23–43 (LALIAFLIANPLIFFINPFVA), 63–83 (PLLPGGLLAIEAVIIGMTSAA), 97–117 (LLLMFMVAGIYFMKQLLLFIF), 120–140 (LLLSIRSKMLLSLAFCMAAAF), 144–164 (FLDALTVVAVVISVAVGFYGI), 202–222 (LMMHAGVGTALGGVMTMVGEP), 238–258 (FFLRMSPVTVPVLICGLFTCV), 303–323 (AIIGVWLVTALALHLAEVGLI), 357–377 (LTVFFSIVAVIIDQHLFAPII), 391–411 (LFYLFNGLLSSISDNVFVGTI), 447–467 (ATPNGQAAFLFLLTSALAPLI), and 475–495 (VWMALPYTLVLTLVGLLCVEF).

This sequence belongs to the NhaB Na(+)/H(+) (TC 2.A.34) antiporter family.

The protein resides in the cell inner membrane. The catalysed reaction is 2 Na(+)(in) + 3 H(+)(out) = 2 Na(+)(out) + 3 H(+)(in). Functionally, na(+)/H(+) antiporter that extrudes sodium in exchange for external protons. The polypeptide is Na(+)/H(+) antiporter NhaB (Citrobacter koseri (strain ATCC BAA-895 / CDC 4225-83 / SGSC4696)).